The primary structure comprises 70 residues: UPF0434 protein MCA0634 (70 aa).

Belongs to the UPF0434 family.

This chain is UPF0434 protein MCA0634, found in Methylococcus capsulatus (strain ATCC 33009 / NCIMB 11132 / Bath).